Consider the following 149-residue polypeptide: Transcriptional repressor NrdR (149 aa).

A zinc finger spans residues cysteine 3 to cysteine 34. The 91-residue stretch at proline 49–glutamate 139 folds into the ATP-cone domain.

This sequence belongs to the NrdR family. The cofactor is Zn(2+).

Its function is as follows. Negatively regulates transcription of bacterial ribonucleotide reductase nrd genes and operons by binding to NrdR-boxes. The polypeptide is Transcriptional repressor NrdR (Vibrio cholerae serotype O1 (strain ATCC 39541 / Classical Ogawa 395 / O395)).